A 390-amino-acid polypeptide reads, in one-letter code: L-rhamnonate dehydratase (390 aa).

2 residues coordinate substrate: H19 and R45. D211, E237, and E265 together coordinate Mg(2+). H315 (proton acceptor) is an active-site residue. E335 lines the substrate pocket.

This sequence belongs to the mandelate racemase/muconate lactonizing enzyme family. RhamD subfamily. Mg(2+) serves as cofactor.

It carries out the reaction L-rhamnonate = 2-dehydro-3-deoxy-L-rhamnonate + H2O. Functionally, catalyzes the dehydration of L-rhamnonate to 2-keto-3-deoxy-L-rhamnonate (KDR). The chain is L-rhamnonate dehydratase from Saccharopolyspora erythraea (strain ATCC 11635 / DSM 40517 / JCM 4748 / NBRC 13426 / NCIMB 8594 / NRRL 2338).